The primary structure comprises 147 residues: Hemoglobin subunit beta (147 aa).

Val-2 is modified (N-acetylvaline). The Globin domain occupies 3-147 (HLTPDEKAAV…VANALAHKYH (145 aa)). Thr-13 bears the Phosphothreonine mark. Residue Ser-45 is modified to Phosphoserine. Lys-60 is modified (N6-acetyllysine). His-64 serves as a coordination point for heme b. Lys-83 is subject to N6-acetyllysine. His-93 contacts heme b. The residue at position 94 (Cys-94) is an S-nitrosocysteine. Lys-145 is subject to N6-acetyllysine.

It belongs to the globin family. As to quaternary structure, heterotetramer of two alpha chains and two beta chains. As to expression, red blood cells.

Functionally, involved in oxygen transport from the lung to the various peripheral tissues. This chain is Hemoglobin subunit beta (HBB), found in Colobus polykomos (Western black-and-white colobus monkey).